The sequence spans 963 residues: Glycine dehydrogenase (decarboxylating) (963 aa).

The residue at position 710 (Lys710) is an N6-(pyridoxal phosphate)lysine.

It belongs to the GcvP family. As to quaternary structure, the glycine cleavage system is composed of four proteins: P, T, L and H. It depends on pyridoxal 5'-phosphate as a cofactor.

It carries out the reaction N(6)-[(R)-lipoyl]-L-lysyl-[glycine-cleavage complex H protein] + glycine + H(+) = N(6)-[(R)-S(8)-aminomethyldihydrolipoyl]-L-lysyl-[glycine-cleavage complex H protein] + CO2. Functionally, the glycine cleavage system catalyzes the degradation of glycine. The P protein binds the alpha-amino group of glycine through its pyridoxal phosphate cofactor; CO(2) is released and the remaining methylamine moiety is then transferred to the lipoamide cofactor of the H protein. This chain is Glycine dehydrogenase (decarboxylating), found in Pseudoalteromonas translucida (strain TAC 125).